Reading from the N-terminus, the 597-residue chain is Fructan 1-exohydrolase (597 aa).

A signal peptide spans 1-15; that stretch reads MAQAWAFLLPVLVFG. Residue Asp76 is part of the active site. N-linked (GlcNAc...) asparagine glycans are attached at residues Asn169, Asn237, and Asn249. Cys447 and Cys493 are oxidised to a cystine. Residue Asn568 is glycosylated (N-linked (GlcNAc...) asparagine).

The protein belongs to the glycosyl hydrolase 32 family.

It carries out the reaction Hydrolysis of terminal, non-reducing (2-&gt;1)-linked beta-D-fructofuranose residues in fructans.. With respect to regulation, inhibited by sucrose. Its function is as follows. Hydrolyzes inulin-type beta-(2,1)-fructans. May play a role as a beta-(2,1)-trimmer during graminan biosynthesis. In Triticum urartu (Red wild einkorn), this protein is Fructan 1-exohydrolase.